Reading from the N-terminus, the 127-residue chain is Fluoride-specific ion channel FluC (127 aa).

4 consecutive transmembrane segments (helical) span residues 8 to 28, 37 to 57, 68 to 88, and 100 to 120; these read LLIA…QYWF, PWGT…VYAI, WKFL…TFSY, and ILFL…AFAG. Residues glycine 78 and threonine 81 each contribute to the Na(+) site.

Belongs to the fluoride channel Fluc/FEX (TC 1.A.43) family.

It is found in the cell inner membrane. The catalysed reaction is fluoride(in) = fluoride(out). With respect to regulation, na(+) is not transported, but it plays an essential structural role and its presence is essential for fluoride channel function. Functionally, fluoride-specific ion channel. Important for reducing fluoride concentration in the cell, thus reducing its toxicity. The sequence is that of Fluoride-specific ion channel FluC from Leptospira interrogans serogroup Icterohaemorrhagiae serovar Lai (strain 56601).